The sequence spans 303 residues: Methionyl-tRNA formyltransferase (303 aa).

A (6S)-5,6,7,8-tetrahydrofolate-binding site is contributed by 108–111 (SDLP).

The protein belongs to the Fmt family.

The catalysed reaction is L-methionyl-tRNA(fMet) + (6R)-10-formyltetrahydrofolate = N-formyl-L-methionyl-tRNA(fMet) + (6S)-5,6,7,8-tetrahydrofolate + H(+). In terms of biological role, attaches a formyl group to the free amino group of methionyl-tRNA(fMet). The formyl group appears to play a dual role in the initiator identity of N-formylmethionyl-tRNA by promoting its recognition by IF2 and preventing the misappropriation of this tRNA by the elongation apparatus. This Rickettsia rickettsii (strain Iowa) protein is Methionyl-tRNA formyltransferase.